The sequence spans 61 residues: Small ribosomal subunit protein uS14 (61 aa).

The Zn(2+) site is built by cysteine 24, cysteine 27, cysteine 40, and cysteine 43.

This sequence belongs to the universal ribosomal protein uS14 family. Zinc-binding uS14 subfamily. In terms of assembly, part of the 30S ribosomal subunit. Contacts proteins S3 and S10. Zn(2+) is required as a cofactor.

In terms of biological role, binds 16S rRNA, required for the assembly of 30S particles and may also be responsible for determining the conformation of the 16S rRNA at the A site. This chain is Small ribosomal subunit protein uS14, found in Nitratiruptor sp. (strain SB155-2).